The sequence spans 178 residues: Transcription factor E (178 aa).

An HTH TFE/IIEalpha-type domain is found at 4-88 (AEDLFINLAK…YWKPNIDQIN (85 aa)).

This sequence belongs to the TFE family. Monomer. Interaction with RNA polymerase subunits RpoF and RpoE is necessary for Tfe stimulatory transcription activity. Able to interact with Tbp and RNA polymerase in the absence of DNA promoter. Interacts both with the preinitiation and elongation complexes.

In terms of biological role, transcription factor that plays a role in the activation of archaeal genes transcribed by RNA polymerase. Facilitates transcription initiation by enhancing TATA-box recognition by TATA-box-binding protein (Tbp), and transcription factor B (Tfb) and RNA polymerase recruitment. Not absolutely required for transcription in vitro, but particularly important in cases where Tbp or Tfb function is not optimal. It dynamically alters the nucleic acid-binding properties of RNA polymerases by stabilizing the initiation complex and destabilizing elongation complexes. Seems to translocate with the RNA polymerase following initiation and acts by binding to the non template strand of the transcription bubble in elongation complexes. This is Transcription factor E from Saccharolobus islandicus (strain L.S.2.15 / Lassen #1) (Sulfolobus islandicus).